The following is a 371-amino-acid chain: Putative HAD-like hydrolase Noc_2718 (371 aa).

An HAD-like hydrolase region spans residues 1–288 (MKQKILLCSD…TGREESAEEE (288 aa)). Residues 291-371 (QSCAIYRSCK…QLSSREYRRS (81 aa)) form the YcgL domain.

This sequence in the N-terminal section; belongs to the HAD-like hydrolase superfamily.

In Nitrosococcus oceani (strain ATCC 19707 / BCRC 17464 / JCM 30415 / NCIMB 11848 / C-107), this protein is Putative HAD-like hydrolase Noc_2718.